Consider the following 427-residue polypeptide: tRNA(Ile)-lysidine synthase (427 aa).

25 to 30 (SGGLDS) provides a ligand contact to ATP.

The protein belongs to the tRNA(Ile)-lysidine synthase family.

The protein resides in the cytoplasm. It carries out the reaction cytidine(34) in tRNA(Ile2) + L-lysine + ATP = lysidine(34) in tRNA(Ile2) + AMP + diphosphate + H(+). Functionally, ligates lysine onto the cytidine present at position 34 of the AUA codon-specific tRNA(Ile) that contains the anticodon CAU, in an ATP-dependent manner. Cytidine is converted to lysidine, thus changing the amino acid specificity of the tRNA from methionine to isoleucine. This Histophilus somni (strain 129Pt) (Haemophilus somnus) protein is tRNA(Ile)-lysidine synthase.